Here is a 688-residue protein sequence, read N- to C-terminus: Complement C1s subcomponent (688 aa).

The N-terminal stretch at 1–15 (MWCIVLFSLLAWVYA) is a signal peptide. The 115-residue stretch at 16-130 (EPTMYGEILS…TGFAAYYVAT (115 aa)) folds into the CUB 1 domain. Residues Glu-60, Asp-68, Asp-113, Asp-131, Ile-132, and Glu-134 each coordinate Ca(2+). Cys-65 and Cys-83 are joined by a disulfide. In terms of domain architecture, EGF-like; calcium-binding spans 131–172 (DINECTDFVDVPCSHFCNNFIGGYFCSCPPEYFLHDDMKNCG). Cystine bridges form between Cys-135–Cys-147, Cys-143–Cys-156, and Cys-158–Cys-171. Residues Asn-149, Phe-150, and Gly-153 each contribute to the Ca(2+) site. The residue at position 149 (Asn-149) is a (3R)-3-hydroxyasparagine. A glycan (N-linked (GlcNAc...) asparagine) is linked at Asn-174. A disulfide bridge connects residues Cys-175 and Cys-202. The region spanning 175–290 (CSGDVFTALI…KGWKLRYHGD (116 aa)) is the CUB 2 domain. Ca(2+)-binding residues include Glu-226, Asp-236, Asp-275, Gly-278, and Gln-279. An intrachain disulfide couples Cys-234 to Cys-251. Sushi domains are found at residues 292–356 (MPCP…KCQP) and 357–423 (VDCG…KCVP). 7 disulfide bridges follow: Cys-294/Cys-341, Cys-321/Cys-354, Cys-359/Cys-403, Cys-386/Cys-421, Cys-425/Cys-549, Cys-595/Cys-618, and Cys-628/Cys-659. Residue Asn-406 is glycosylated (N-linked (GlcNAc...) asparagine). The Peptidase S1 domain maps to 438 to 680 (IIGGSDADIK…YVDWIMKTMQ (243 aa)). Active-site charge relay system residues include His-475 and Asp-529. Ser-632 (charge relay system) is an active-site residue.

It belongs to the peptidase S1 family. In terms of assembly, core component of the complement C1 complex, a calcium-dependent complex composed of 1 molecule of the C1Q subcomplex, 2 molecules of C1R and 2 molecules of C1S. The C1Q subcomplex is composed 18 subunits: 3 chains of C1QA, C1QB, and C1QC trimerize to form 6 collagen-like triple helices connected to six globular ligand-recognition modules. Cleaved and activated by C1R to generate Complement C1s subcomponent heavy and light chains. Post-translationally, the iron and 2-oxoglutarate dependent 3-hydroxylation of aspartate and asparagine is (R) stereospecific within EGF domains.

Its subcellular location is the secreted. It localises to the cell surface. It carries out the reaction Cleavage of Arg-|-Ala bond in complement component C4 to form C4a and C4b, and Lys(or Arg)-|-Lys bond in complement component C2 to form C2a and C2b: the 'classical' pathway C3 convertase.. With respect to regulation, cleaved and activated by C1R. Immunoglobulin-binding promotes autoactivation of C1R, which results in the cleavage of the Arg-Ile bond in the catalytic domain. Inhibited by C1 inhibitor (SERPING1). In terms of biological role, component of the complement C1 complex, a multiprotein complex that initiates the classical pathway of the complement system, a cascade of proteins that leads to phagocytosis and breakdown of pathogens and signaling that strengthens the adaptive immune system. C1S is activated following association of the C1 complex with immunoglobulins (IgG or IgM) complexed with antigens to form antigen-antibody complexes on the surface of pathogens. C1S is cleaved and activated by C1R to generate C1s subcomponent heavy and light chains. C1s subcomponent light chain then cleaves and activates C2 and C4, the next components of the classical complement pathway. Functionally, serine protease component of the complement C1 complex, which catalyzes cleavage and activation of C2 and C4, the next components of the classical complement pathway. Also able to cleave C1 inhibitor (SERPING1) in vitro; additional evidence is however required to confirm this result in vivo. Also cleaves IGFBP5 and thereby inhibits the trophic effects of IGF1. This is Complement C1s subcomponent from Homo sapiens (Human).